We begin with the raw amino-acid sequence, 155 residues long: Aspartate carbamoyltransferase regulatory chain (155 aa).

Zn(2+)-binding residues include Cys111, Cys116, Cys137, and Cys140.

Belongs to the PyrI family. In terms of assembly, contains catalytic and regulatory chains. Zn(2+) is required as a cofactor.

Its function is as follows. Involved in allosteric regulation of aspartate carbamoyltransferase. The chain is Aspartate carbamoyltransferase regulatory chain from Haloarcula marismortui (strain ATCC 43049 / DSM 3752 / JCM 8966 / VKM B-1809) (Halobacterium marismortui).